The sequence spans 188 residues: Peptidyl-tRNA hydrolase (188 aa).

Residue Tyr14 participates in tRNA binding. His19 (proton acceptor) is an active-site residue. Positions 60 and 62 each coordinate tRNA.

Belongs to the PTH family. In terms of assembly, monomer.

The protein resides in the cytoplasm. The enzyme catalyses an N-acyl-L-alpha-aminoacyl-tRNA + H2O = an N-acyl-L-amino acid + a tRNA + H(+). In terms of biological role, hydrolyzes ribosome-free peptidyl-tRNAs (with 1 or more amino acids incorporated), which drop off the ribosome during protein synthesis, or as a result of ribosome stalling. Functionally, catalyzes the release of premature peptidyl moieties from peptidyl-tRNA molecules trapped in stalled 50S ribosomal subunits, and thus maintains levels of free tRNAs and 50S ribosomes. The sequence is that of Peptidyl-tRNA hydrolase from Mycoplasmopsis agalactiae (strain NCTC 10123 / CIP 59.7 / PG2) (Mycoplasma agalactiae).